We begin with the raw amino-acid sequence, 216 residues long: MKLNLVQIFFMLLMLLLGLGMGLGLGLHMATAVLEESDQPLNEFWSSDSQDKAEATEEGDGTQTTETLVLSNKEVVQPGWPEDPILGEDEVGGNKMLRASALFQSNKDYLRLDQTDRECNDMMAHKMKEPSQSCIAQYAFIHEDLNTVKAVCNSPVIACELKGGKCHKSSRPFDLTLCELSQPDQVTPNCNYLTSVIKKHIIITCNDMKRQLPTGQ.

An N-terminal signal peptide occupies residues 1–26 (MKLNLVQIFFMLLMLLLGLGMGLGLG). The interval 43 to 65 (EFWSSDSQDKAEATEEGDGTQTT) is disordered.

It belongs to the pancreatic ribonuclease family. In terms of processing, the N-terminus is blocked. Glycosylated.

It is found in the secreted. Its function is as follows. Secreted proximal epididymal protein required for post-testicular sperm maturation and male fertility. May be involved in sperm adhesion to the egg zona pellucida. Does not have ribonuclease activity. The polypeptide is Inactive ribonuclease-like protein 10 (RNASE10) (Homo sapiens (Human)).